The sequence spans 273 residues: Glutamate racemase (273 aa).

Residues 11–12 and 43–44 each bind substrate; these read DS and YG. Cys74 serves as the catalytic Proton donor/acceptor. Substrate is bound at residue 75–76; sequence NT. Cys185 serves as the catalytic Proton donor/acceptor. 186–187 provides a ligand contact to substrate; the sequence is TH.

Belongs to the aspartate/glutamate racemases family.

It catalyses the reaction L-glutamate = D-glutamate. The protein operates within cell wall biogenesis; peptidoglycan biosynthesis. Functionally, provides the (R)-glutamate required for cell wall biosynthesis. This Lactiplantibacillus plantarum (strain ATCC BAA-793 / NCIMB 8826 / WCFS1) (Lactobacillus plantarum) protein is Glutamate racemase.